A 146-amino-acid polypeptide reads, in one-letter code: Pre-mRNA-splicing factor cwf14 (146 aa).

The protein belongs to the BUD31 (G10) family. As to quaternary structure, belongs to the 40S cdc5-associated complex (or cwf complex), a spliceosome sub-complex reminiscent of a late-stage spliceosome composed of the U2, U5 and U6 snRNAs and at least brr2, cdc5, cwf2/prp3, cwf3/syf1, cwf4/syf3, cwf5/ecm2, spp42/cwf6, cwf7/spf27, cwf8, cwf9, cwf10, cwf11, cwf12, prp45/cwf13, cwf14, cwf15, cwf16, cwf17, cwf18, cwf19, cwf20, cwf21, cwf22, cwf23, cwf24, cwf25, cwf26, cyp7/cwf27, cwf28, cwf29/ist3, lea1, msl1, prp5/cwf1, prp10, prp12/sap130, prp17, prp22, sap61, sap62, sap114, sap145, slu7, smb1, smd1, smd3, smf1, smg1 and syf2.

The protein localises to the nucleus. Its function is as follows. Involved in mRNA splicing where it associates with cdc5 and the other cwf proteins as part of the spliceosome. This Schizosaccharomyces pombe (strain 972 / ATCC 24843) (Fission yeast) protein is Pre-mRNA-splicing factor cwf14 (cwf14).